We begin with the raw amino-acid sequence, 311 residues long: Aquaporin-1 (311 aa).

At 1 to 16 (MHPQVASLFDNVYEDL) the chain is on the cytoplasmic side. Residues 17-37 (AAATLEFIGTAFFLLFGLGGI) form a helical membrane-spanning segment. At 38-56 (QASTAEDTASSQPPASGIE) the chain is on the extracellular side. The helical transmembrane segment at 57–77 (HVLYISTCMGFSLVVSAWLFF) threads the bilayer. A topological domain (cytoplasmic) is located at residue R78. The chain crosses the membrane as a helical span at residues 79 to 99 (VTGGLFNPNISFALLLVGGLK). An NPA 1 motif is present at residues 85 to 87 (NPN). Residue P100 is a topological domain, extracellular. A helical membrane pass occupies residues 101–121 (LRFVLFCIAQLTGAIAGAAIV). Residues 122 to 143 (RGLTSAPLSVNNVLQQGTSAAQ) are Cytoplasmic-facing. A helical membrane pass occupies residues 144–164 (GVFIEMFITAALVLSVLMLAA). Over 165-168 (EKHE) the chain is Extracellular. Residues 169-189 (ATPFAPVGIGLTLFACHLFAV) traverse the membrane as a helical segment. The Cytoplasmic portion of the chain corresponds to 190 to 215 (YYTGAAMNSARAFGPAVISGFPEPQH). The NPA 2 signature appears at 197–199 (NSA). Residues 216–236 (WVYWVGPFLGSLLGAGFYATL) form a helical membrane-spanning segment. Residues 237–311 (KHYKYWRLNP…TSSRTNFSPV (75 aa)) are Extracellular-facing. The disordered stretch occupies residues 276 to 311 (DEETRNGCASNEEGVRATGDEKSSNATSSRTNFSPV). Positions 288–298 (EGVRATGDEKS) are enriched in basic and acidic residues. Positions 299-311 (SNATSSRTNFSPV) are enriched in polar residues. An N-linked (GlcNAc...) asparagine glycan is attached at N300.

The protein belongs to the MIP/aquaporin (TC 1.A.8) family.

The protein localises to the cell membrane. The catalysed reaction is H2O(in) = H2O(out). The enzyme catalyses H2O2(out) = H2O2(in). It catalyses the reaction nitric oxide(out) = nitric oxide(in). It carries out the reaction CO2(out) = CO2(in). Its function is as follows. Water channel required to facilitate the transport of water across membranes. Also mediates the transport nitric oxide, hydrogen peroxide and carbon dioxide across the membrane. Required for Hartig net development in trembling aspen trees. Contributes in fungal cellular processes during the basidiocarp formation. This chain is Aquaporin-1, found in Laccaria bicolor (Bicoloured deceiver).